The sequence spans 301 residues: Putative dynamin-related protein 4A (301 aa).

One can recognise a Dynamin-type G domain in the interval 59 to 301 (GIQLPTIVVV…LIDGDIVGIL (243 aa)). A G1 motif region spans residues 69 to 76 (GDQSSGKS). 69–76 (GDQSSGKS) lines the GTP pocket. The segment at 94–96 (CTR) is G2 motif. The tract at residues 168 to 171 (DLPG) is G3 motif. GTP-binding positions include 168-172 (DLPGI) and 237-240 (TKAD). The segment at 237-240 (TKAD) is G4 motif. Position 270 (glutamate 270) is a region of interest, G5 motif.

It belongs to the TRAFAC class dynamin-like GTPase superfamily. Dynamin/Fzo/YdjA family.

This chain is Putative dynamin-related protein 4A (DRP4A), found in Arabidopsis thaliana (Mouse-ear cress).